Consider the following 94-residue polypeptide: Integration host factor subunit beta (94 aa).

This sequence belongs to the bacterial histone-like protein family. In terms of assembly, heterodimer of an alpha and a beta chain.

In terms of biological role, this protein is one of the two subunits of integration host factor, a specific DNA-binding protein that functions in genetic recombination as well as in transcriptional and translational control. This Azorhizobium caulinodans (strain ATCC 43989 / DSM 5975 / JCM 20966 / LMG 6465 / NBRC 14845 / NCIMB 13405 / ORS 571) protein is Integration host factor subunit beta.